Consider the following 80-residue polypeptide: Large ribosomal subunit protein bL31 (80 aa).

It belongs to the bacterial ribosomal protein bL31 family. Type A subfamily. In terms of assembly, part of the 50S ribosomal subunit.

Its function is as follows. Binds the 23S rRNA. In Nostoc punctiforme (strain ATCC 29133 / PCC 73102), this protein is Large ribosomal subunit protein bL31.